We begin with the raw amino-acid sequence, 60 residues long: Large ribosomal subunit protein bL32 (60 aa).

The segment at methionine 1–serine 43 is disordered.

Belongs to the bacterial ribosomal protein bL32 family.

In Nitrosomonas europaea (strain ATCC 19718 / CIP 103999 / KCTC 2705 / NBRC 14298), this protein is Large ribosomal subunit protein bL32.